We begin with the raw amino-acid sequence, 451 residues long: BAHD acyltransferase At3g29680 (451 aa).

Catalysis depends on proton acceptor residues His161 and Asp393.

It belongs to the plant acyltransferase family.

The sequence is that of BAHD acyltransferase At3g29680 from Arabidopsis thaliana (Mouse-ear cress).